We begin with the raw amino-acid sequence, 1284 residues long: ATP-dependent helicase fft2 (1284 aa).

Composition is skewed to polar residues over residues 1-10 (MLPYNSNYLS) and 20-57 (ENPQ…AMYG). 5 disordered regions span residues 1–57 (MLPY…AMYG), 185–252 (AQPP…LPPV), 317–339 (KQSP…QSQK), 353–388 (STQA…EEPE), and 446–465 (PDDV…KNPM). Low complexity predominate over residues 201-241 (RSNSRSSARSTARSAPRSTQRSRSSSANPVTTPPVNNTLLT). Polar residues-rich tracts occupy residues 320 to 339 (PVAS…QSQK) and 353 to 372 (STQA…ASKK). At serine 323 the chain carries Phosphoserine. Residues 376–388 (EEDEFYDSEEEPE) are compositionally biased toward acidic residues. Serine 383 bears the Phosphoserine mark. The Helicase ATP-binding domain occupies 562 to 730 (HLLYQQKLSG…VSLLAFILPN (169 aa)). Residue 575 to 582 (DEMGLGKT) coordinates ATP. A DEGH box motif is present at residues 681-684 (DEGH). The interval 816–839 (QQLRRDDKRNKRSKNDEESDGKSL) is disordered. A compositionally biased stretch (basic and acidic residues) spans 818–831 (LRRDDKRNKRSKND). In terms of domain architecture, Helicase C-terminal spans 928 to 1079 (VLKELLPKMK…SLSSDGKDRE (152 aa)). Residues 1088–1284 (DMLDEENNGN…SEVDNNAAKD (197 aa)) form a disordered region. The span at 1095–1107 (NGNNTKPEITGNE) shows a compositional bias: polar residues. A compositionally biased stretch (basic and acidic residues) spans 1143–1177 (EKTDLADGDEKANIKTEMKSETVEGDNKELRETMK). Polar residues predominate over residues 1180-1194 (NVQTDSNAAVPSSKS). Basic and acidic residues-rich tracts occupy residues 1243-1256 (QLEK…KKPD) and 1266-1284 (EEEK…AAKD).

It belongs to the SNF2/RAD54 helicase family.

It is found in the cytoplasm. It localises to the nucleus. It catalyses the reaction ATP + H2O = ADP + phosphate + H(+). Its function is as follows. DNA helicase that possesses intrinsic ATP-dependent nucleosome-remodeling activity and is required for heterochromatin organization. The polypeptide is ATP-dependent helicase fft2 (fft2) (Schizosaccharomyces pombe (strain 972 / ATCC 24843) (Fission yeast)).